The following is a 5495-amino-acid chain: Microtubule-associated protein futsch (5495 aa).

20 disordered regions span residues 1–97 (MGDQ…DADG), 656–975 (AKAD…LKEE), 988–1074 (RDEM…AEEE), 1086–1111 (ERKARLEGASARQDESELDVEPEQSK), 1128–1167 (KSRTEEQLAKPAEEELSSPTPEEKLSKKTSDTKDDQIGAP), 1185–1204 (SATIESGATTAPTLPEDERI), 1255–1275 (KDAPKDANAEALGELPDSGER), 1306–1358 (HEEA…EPNK), 1402–1840 (NQED…VVES), 1866–2631 (EIGK…PGFV), 2709–2810 (AKTV…KDFA), 2830–4166 (LPTL…DLSL), 4196–4230 (KAESSPRPAVLSKPAEFSQPDTGHTASTPVDEASP), 4362–4612 (IIPD…ASQL), 4636–4668 (AQKSNKEIKDARETKVTSQFTTTTSSATKDDSL), 4687–4975 (AFST…QMLA), 5035–5065 (KTVTTTDSSEPDSEKVVVTTTRTTSESERDQ), 5101–5138 (SYELQHSSSGVSKRSDLDADGDESQDDIPPQYGSEEHS), 5170–5199 (PSTEPIPIQGAPSGDSQSSESVESSSQTWA), and 5328–5350 (GLPSPAPLPVEGGADIRTTPKKE). Positions 35 to 48 (AKGAGDGPAQDAAQ) are enriched in low complexity. Composition is skewed to basic and acidic residues over residues 656-672 (AKADSMDTDAEPEHEAD), 696-716 (EPEHEPEAEQDKDVGEEKKVE), and 758-795 (GKADKPRAEVKPVVRSRIDTKPPKSMDRKLAKRDEKKS). Composition is skewed to low complexity over residues 797-806 (PTTTPAARAP) and 819-831 (PATKSSPSSTPAK). The segment covering 832–843 (SAKEANNRKVLE) has biased composition (basic and acidic residues). Positions 850–888 (RVQATSTVSRRVTSTASERRVQQQAEAKTAATGATQATQ) are enriched in low complexity. A compositionally biased stretch (basic and acidic residues) spans 918 to 931 (KAADLKKTRLDKGG). The span at 932 to 942 (TTDSSLVSTPS) shows a compositional bias: polar residues. Basic and acidic residues-rich tracts occupy residues 962–975 (DAEKQRELDDLKEE) and 988–1007 (RDEMKRQQHQQIKAELREMP). Residues 1012–1041 (GDGENEPDEEEEYLIIEKEEVEQYTEDSIV) are compositionally biased toward acidic residues. Residues 1047 to 1065 (MTKEEEIQKHQRDSQESEK) are compositionally biased toward basic and acidic residues. Basic and acidic residues-rich tracts occupy residues 1128 to 1140 (KSRTEEQLAKPAE) and 1148 to 1163 (PEEKLSKKTSDTKDDQ). The span at 1187-1196 (TIESGATTAP) shows a compositional bias: polar residues. Basic and acidic residues-rich tracts occupy residues 1306 to 1319 (HEEADLGLYEKDSQ), 1327 to 1337 (SHKEESAKEEK), 1343 to 1358 (KENKVGEIELGDEPNK), and 1408 to 1443 (EQVKDKEEHEQKIESGIITEKEAKKSASTPEEKETS). A run of 2 repeats spans residues 1469 to 1502 (REDTGSIESPPTIEEAIEVEVQAKQEAQKPVPAP) and 1513 to 1539 (LASKETSRPESATGSVKEDTEQTKSKK). The segment at 1469–4032 (REDTGSIESP…SPLASKESSR (2564 aa)) is 53 X approximate repeat. Composition is skewed to basic and acidic residues over residues 1546 to 1555 (PESEAKDKKS), 1571 to 1663 (SVKD…DEKS), 1679 to 1696 (SVKDETEKSKEPSRRESI), 1718 to 1732 (GIKDESAKPESRRDS), and 1748 to 1779 (SVKDEPIKSTEKSRRESVAESFKADSTKDEKS). Repeat copies occupy residues 1622 to 1649 (KSALASKEASRPESVTDKSKEPSRRESI), 1660 to 1686 (DEKSAPPSKEASRPGSVVESVKDETEK), 1690 to 1718 (PSRRESIAESAKPPIEFREVSRPESVIDG), 1755 to 1782 (KSTEKSRRESVAESFKADSTKDEKSPLT), 1790 to 1818 (ESAVENVMDAVGSAERSQPESVTASRDVS), 1837 to 1865 (VVESVIPASDVVEIEKGAADKEKGVFVSL), 1874 to 1902 (SEVISRPGPVVESVKPESRRESSTEIVLP), 1911 to 1939 (PSRPESKVECLKDESEVLKGSTRRESVAE), 1948 to 1976 (KETSRPESAVGSMKDESMSKEPSRRESVK), 1985 to 2013 (TSRPASVAESAKDGADDLKELSRPESTTQ), 2022 to 2050 (DEKSPLASEEASRPASVAESVKDEAEKSK), 2059 to 2087 (AEKSPLPSKEASRPASVAESIKDEAEKSK), 2096 to 2124 (AEKSPLPSKEASRPASVAESIKDEAEKSK), 2133 to 2161 (AEKSPLPSKEASRPASVAESIKDEAEKSK), 2170 to 2198 (AEKSPLPSKEASRPASVAESIKDEAEKSK), 2215 to 2243 (KEASRPASVAESIKDEAEKSKEESRRESV), and 2262 to 2292 (ESIKDEAEKSKEESRRESVAEKSPLPSKEAS). Positions 1804–1815 (ERSQPESVTASR) are enriched in polar residues. Basic and acidic residues-rich tracts occupy residues 1887 to 1896 (VKPESRRESS), 1904 to 1942 (HAEDSKEPSRPESKVECLKDESEVLKGSTRRESVAESDK), 1960 to 1976 (MKDESMSKEPSRRESVK), 1994 to 2007 (SAKDGADDLKELSR), 2041 to 2059 (SVKDEAEKSKEESRRESVA), 2078 to 2096 (SIKDEAEKSKEESRRESVA), 2115 to 2133 (SIKDEAEKSKEESRRESVA), 2152 to 2170 (SIKDEAEKSKEESRRESVA), 2189 to 2207 (SIKDEAEKSKEESRRESVA), 2226 to 2244 (SIKDEAEKSKEESRRESVA), 2263 to 2281 (SIKDEAEKSKEESRRESVA), 2300 to 2318 (SIKDEAEKSKEETRRESVA), 2337 to 2355 (SIKDEAEKSKEESRRESAA), 2374 to 2391 (SVKDEADKSKEESRRESM), 2419 to 2435 (SVKDDPVKSKEPSRRES), 2466 to 2482 (SVKDEAEKQESRRESKT), 2560 to 2588 (IKYDLDKPQIIKDDKSTEHSRRESLEDKS), and 2604 to 2627 (SDHEAAVAIEDDAKSSISPKDKSR). Repeat 20 spans residues 2355 to 2391 (AEKSPLPSKEASRPASVAESVKDEADKSKEESRRESM). A run of 2 repeats spans residues 2703–2726 (LAQIGAAKTVSSPLDEALRTPSAP) and 2761–2787 (WVAESKDDAAQLKSSVEDLRSPVASTE). A compositionally biased stretch (basic and acidic residues) spans 2764–2780 (ESKDDAAQLKSSVEDLR). Phosphoserine; by GSK3-beta is present on Ser2800. Tandem repeats lie at residues 2820 to 2846 (LPLTIELKGNLPTLSSPVDVAHGDFPQ), 2864 to 2892 (LSKVDIEKTASSPIDEAPKSLIGCPAEER), and 2907 to 2933 (VEKSKDASRPPSVVESTKADSTKGDIS). Residues 2845 to 2861 (PQTSTPTSSPTVASVQP) show a composition bias toward low complexity. 2 stretches are compositionally biased toward basic and acidic residues: residues 2889-2914 (AEERPESPAESAKDAAESVEKSKDAS) and 2942-2954 (GPKDDVEKSKESS). The segment covering 2955–2966 (RPPSVSASITGD) has biased composition (polar residues). A run of 28 repeats spans residues 2956-2987 (PPSVSASITGDSTKDVSRPASVVESVKDEHDK), 3006-3034 (GKSDSKSSSQDSQKDEKSTLASKEASRRE), 3049-3075 (SRPESVIASGEPVPRESKSPLDSKDTS), 3089-3117 (EKSEQQSRRESVAESVKADTKKDGKSQEA), 3131-3158 (DEKQESRRQSITGSHKAMSTMGDESPMD), 3200-3224 (KSDITKGEKSPLPSKEVSRPESVVG), 3228-3256 (DEKAESRRESVAESVKPESSKDATSAPPS), 3265-3293 (VLGSLKDEGDKTTSRRVSVADSIKDEKSL), 3302-3330 (PESEAESLKDAAAPSQETSRPESVTESVK), 3339-3367 (KEASRPASVAENAKDSADESKEQRPESLP), 3376-3404 (DEKSPLASKDEAEKSKEESRRESVAEQFP), 3413-3441 (PASVAESVKDEAEKSKEESPLMSKEASRP), 3450-3478 (DEAEKSKEESRRESVAEKSPLPSKEASRP), 3487-3515 (DEADKSKEESRRESGAEKSPLASKEASRP), 3524-3552 (DEAEKSKEESRRESVAEKSPLPSKEASRP), 3561-3589 (DEAEKSKEESRRDSVAEKSPLASKEASRP), 3598-3626 (DEAEKSKEESRRESVAEKSPLASKEASRP), 3635-3663 (DEAEKSKEESRRESVAEKSPLASKEASRP), 3672-3700 (DEAEKSKEESSRDSVAEKSPLASKEASRP), 3709-3737 (DEAEKSKEESRRESVAEKSPLASKEASRP), 3746-3774 (DDAEKSKEESRRESVAEKSPLASKEASRP), 3783-3811 (DEAEKSKEESRRESVAEKSPLPSKEASRP), 3820-3848 (DEAEKSKEESRRESVAEKSSLASKKASRP), 3867-3894 (RRESVAEKSPLASKEASRPASVAESVKD), 3895-3921 (EAEKSKEESRRESVAEKSPLPSKEASR), 3931-3958 (DEADKSKEESRRESGAEKSPLASMEASR), 3968-3995 (DETEKSKEESRRESVTEKSPLPSKEASR), and 4005-4032 (DEAEKSKEESRRESVAEKSPLASKESSR). Composition is skewed to basic and acidic residues over residues 2980–2996 (SVKDEHDKAESRRESIA), 3017–3051 (SQKDEKSTLASKEASRRESVVESSKDDAEKSESRP), 3061–3075 (VPRESKSPLDSKDTS), 3087–3116 (EDEKSEQQSRRESVAESVKADTKKDGKSQE), 3156–3168 (PMDKADKSKEPSR), 3175–3208 (SIKHENTKDEESPLGSRRDSVAESIKSDITKGEK), and 3226–3248 (IKDEKAESRRESVAESVKPESSK). Ser3067, Ser3071, and Ser3075 each carry phosphoserine. The segment covering 3300-3310 (SRPESEAESLK) has biased composition (basic and acidic residues). Polar residues predominate over residues 3316 to 3327 (SQETSRPESVTE). Composition is skewed to basic and acidic residues over residues 3350-3363 (NAKDSADESKEQRP), 3373-3399 (SIKDEKSPLASKDEAEKSKEESRRESV), 3419-3431 (SVKDEAEKSKEES), 3448-3465 (VKDEAEKSKEESRRESVA), 3484-3502 (SVKDEADKSKEESRRESGA), 3521-3539 (SIKDEAEKSKEESRRESVA), 3558-3576 (SVKDEAEKSKEESRRDSVA), 3599-3613 (EAEKSKEESRRESVA), 3632-3650 (SIKDEAEKSKEESRRESVA), 3669-3687 (SVKDEAEKSKEESSRDSVA), 3710-3724 (EAEKSKEESRRESVA), 3743-3761 (SVKDDAEKSKEESRRESVA), 3780-3798 (SVKDEAEKSKEESRRESVA), and 3817-3835 (SVKDEAEKSKEESRRESVA). Over residues 3836–3850 (EKSSLASKKASRPAS) the composition is skewed to low complexity. Composition is skewed to basic and acidic residues over residues 3854–3872 (SVKDEAEKSKEESRRESVA), 3891–3909 (SVKDEAEKSKEESRRESVA), 3928–3946 (SVKDEADKSKEESRRESGA), 3965–3983 (SVKDETEKSKEESRRESVT), 4002–4020 (SVKDEAEKSKEESRRESVA), 4039–4066 (SIKDEAEGTKQESRRESMPESGKAESIK), 4086–4095 (SVKDETEKPE), and 4115–4141 (AKDEKSPLHSRPESVADKSPDASKEAS). Polar residues-rich tracts occupy residues 4142–4152 (RSLSVAETASS) and 4214–4223 (QPDTGHTAST). Basic and acidic residues-rich tracts occupy residues 4362–4379 (IIPDFDERQLEEKLKSTA), 4386–4410 (DKSTRDEKSLEISVKVEIESEKSSP), and 4419–4432 (IEEKDKIEQSEKAQ). Over residues 4443 to 4461 (PESVASQPESVPSPSQSAA) the composition is skewed to low complexity. The segment covering 4462–4481 (SHEHKEVELSESHKAEKSSR) has biased composition (basic and acidic residues). Residues 4498–4508 (RPASSTSQFST) show a composition bias toward polar residues. The segment covering 4517 to 4528 (ESLLHSLTTTET) has biased composition (low complexity). The span at 4529 to 4539 (VETKQMEEKSS) shows a compositional bias: basic and acidic residues. Over residues 4540–4560 (FESVSTSVTKSTVLSSQSTVQ) the composition is skewed to low complexity. Composition is skewed to basic and acidic residues over residues 4575 to 4584 (KVEDSSRRES) and 4639 to 4650 (SNKEIKDARETK). Low complexity-rich tracts occupy residues 4651–4662 (VTSQFTTTTSSA) and 4703–4714 (TTASAVSSTSAS). A compositionally biased stretch (acidic residues) spans 4744 to 4754 (PEDEEPADDVD). Composition is skewed to basic and acidic residues over residues 4755-4764 (ERSSVKESRS) and 4788-4798 (LVEEEHEHVEE). Low complexity predominate over residues 4804–4829 (TSTSKTTTLLQSSEQSSTTTSSTSKT). Positions 4835–4851 (ESITLTQMDQQTSQSQG) are enriched in polar residues. The span at 4875-4905 (GSAGSVIGAGAGAVAAGGKCESSAASIVSSS) shows a compositional bias: low complexity. Positions 4915-4930 (GKSSPGALTSESQSIP) are enriched in polar residues. At Ser4950 the chain carries Phosphoserine; by GSK3-beta. The span at 4955-4970 (VSKDELKSLEMQHHSQ) shows a compositional bias: basic and acidic residues. Residues 5101–5112 (SYELQHSSSGVS) show a composition bias toward polar residues. Residues 5185-5196 (SQSSESVESSSQ) are compositionally biased toward low complexity.

In terms of assembly, heterodimer of a heavy and a light chain. Interacts with Fmr1. Found in a complex with tubulin and Futsch. In terms of processing, several minor light chains can be created with markedly different pIs. Phosphorylated by SGG/GSK3. Phosphorylated by LRRK2 at the presynapse of neuromuscular junctions, which negatively regulates the activity controlling synaptic differentiation. As to expression, neuronal cells within the PNS and CNS.

It localises to the cytoplasm. The protein localises to the cytoskeleton. During embryogenesis, necessary for dendritic and axonal organization and growth at the neuromuscular junction through the regulation of the synaptic microtubule cytoskeleton. Microtubule hairpin loops are found within a small subset of synaptic boutons at the neuromuscular synapse, these loops are stabilized by futsch. Loop morphology and dynamics suggest that rearrangement of these microtubule-based loops is a critical component of the process of bouton division and for subsequent nerve-terminal growth and branching. Translation is repressed by Fmr1. Together with ringer, required for neuromuscular junction (NMJ) bouton growth by regulating synaptic microtubules. Function with ringer in maintaining microtubule stability and dynamics, is essential for promoting axon regeneration in response to peripheral (PNS) and central nervous system (CNS) injury. In response to axotomy, acts downstream of a stress response cascade involving Xbp1 splicing, to control axon regeneration. The chain is Microtubule-associated protein futsch (futsch) from Drosophila melanogaster (Fruit fly).